The sequence spans 353 residues: Probable dual-specificity RNA methyltransferase RlmN (353 aa).

Glu90 serves as the catalytic Proton acceptor. A Radical SAM core domain is found at 96-326 (YKHGNSICIS…VTTRREMGSD (231 aa)). Cys103 and Cys331 form a disulfide bridge. [4Fe-4S] cluster-binding residues include Cys110, Cys114, and Cys117. S-adenosyl-L-methionine contacts are provided by residues 157 to 158 (GE), Ser189, 212 to 214 (SLH), and Asn288. Cys331 serves as the catalytic S-methylcysteine intermediate.

It belongs to the radical SAM superfamily. RlmN family. The cofactor is [4Fe-4S] cluster.

The protein localises to the cytoplasm. It catalyses the reaction adenosine(2503) in 23S rRNA + 2 reduced [2Fe-2S]-[ferredoxin] + 2 S-adenosyl-L-methionine = 2-methyladenosine(2503) in 23S rRNA + 5'-deoxyadenosine + L-methionine + 2 oxidized [2Fe-2S]-[ferredoxin] + S-adenosyl-L-homocysteine. The enzyme catalyses adenosine(37) in tRNA + 2 reduced [2Fe-2S]-[ferredoxin] + 2 S-adenosyl-L-methionine = 2-methyladenosine(37) in tRNA + 5'-deoxyadenosine + L-methionine + 2 oxidized [2Fe-2S]-[ferredoxin] + S-adenosyl-L-homocysteine. Functionally, specifically methylates position 2 of adenine 2503 in 23S rRNA and position 2 of adenine 37 in tRNAs. The sequence is that of Probable dual-specificity RNA methyltransferase RlmN from Clostridium beijerinckii (strain ATCC 51743 / NCIMB 8052) (Clostridium acetobutylicum).